The chain runs to 399 residues: Argonaute-binding protein 1 (399 aa).

As to quaternary structure, component of the argonaute siRNA chaperone (ARC) complex composed of ago1, arb1 and arb2. Interacts with ago1.

The protein resides in the nucleus. Its subcellular location is the cytoplasm. Its function is as follows. Component of the argonaute siRNA chaperone (ARC) complex which is required for histone H3K9 methylation, heterochromatin assembly and siRNA generation. The ARC complex contains mostly double-stranded siRNA. Inhibits the release of the siRNA passenger strand from ago1 together with arb2. Inhibits the slicer activity of ago1. Required for swi6 localization to the centromeric repeats. This chain is Argonaute-binding protein 1 (arb1), found in Schizosaccharomyces pombe (strain 972 / ATCC 24843) (Fission yeast).